A 272-amino-acid polypeptide reads, in one-letter code: N-acetylmuramoyl-L-alanine amidase CwlA (272 aa).

The 119-residue stretch at 24-142 folds into the N-acetylmuramoyl-L-alanine amidase domain; it reads KAEYITIHNT…QDWNGKYCPH (119 aa).

This sequence belongs to the N-acetylmuramoyl-L-alanine amidase 2 family.

The catalysed reaction is Hydrolyzes the link between N-acetylmuramoyl residues and L-amino acid residues in certain cell-wall glycopeptides.. Functionally, autolysins are involved in some important biological processes such as cell separation, cell-wall turnover, competence for genetic transformation, formation of the flagella and sporulation. This is N-acetylmuramoyl-L-alanine amidase CwlA (cwlA) from Bacillus subtilis (strain 168).